The chain runs to 456 residues: Gamma-aminobutyric acid receptor subunit alpha-1 (456 aa).

The first 27 residues, 1 to 27, serve as a signal peptide directing secretion; the sequence is MRKSPGLSDCLWAWILLLSTLTGRSYG. Topologically, residues 28-253 are extracellular; sequence QPSLQDELKD…FHLKRKIGYF (226 aa). N-linked (GlcNAc...) asparagine glycosylation occurs at Asn-38. Arg-94 is a 4-aminobutanoate binding site. Asn-138 carries N-linked (GlcNAc...) asparagine glycosylation. Residue Thr-157 participates in 4-aminobutanoate binding. Cysteines 166 and 180 form a disulfide. The chain crosses the membrane as a helical span at residues 254 to 274; that stretch reads VIQTYLPCIMTVILSQVSFWL. Over 275–279 the chain is Cytoplasmic; the sequence is NRESV. Residues 280–301 form a helical membrane-spanning segment; that stretch reads PARTVFGVTTVLTMTTLSISAR. At 302 to 311 the chain is on the extracellular side; sequence NSLPKVAYAT. Residues 312–333 form a helical membrane-spanning segment; sequence AMDWFIAVCYAFVFSALIEFAT. Topologically, residues 334–421 are cytoplasmic; the sequence is VNYFTKRGYA…TFNSVSKIDR (88 aa). A helical transmembrane segment spans residues 422-441; sequence LSRIAFPLLFGIFNLIYWAT. Over 442–456 the chain is Extracellular; that stretch reads YLNREPQLKAPTPHQ.

This sequence belongs to the ligand-gated ion channel (TC 1.A.9) family. Gamma-aminobutyric acid receptor (TC 1.A.9.5) subfamily. GABRA1 sub-subfamily. As to quaternary structure, heteropentamer, formed by a combination of alpha (GABRA1-6), beta (GABRB1-3), gamma (GABRG1-3), delta (GABRD), epsilon (GABRE), rho (GABRR1-3), pi (GABRP) and theta (GABRQ) subunits, each subunit exhibiting distinct physiological and pharmacological properties. Interacts with UBQLN1. Interacts with TRAK1. Interacts with KIF21B. Identified in a complex of 720 kDa composed of LHFPL4, NLGN2, GABRA1, GABRB2, GABRG2 and GABRB3. Interacts with LHFPL4. Interacts with NLGN2. Interacts with SHISA7; interaction leads to the regulation of GABA(A) receptor trafficking, channel deactivation kinetics and pharmacology.

The protein localises to the postsynaptic cell membrane. The protein resides in the cell membrane. It localises to the cytoplasmic vesicle membrane. The enzyme catalyses chloride(in) = chloride(out). Allosterically activated by benzodiazepines, the neuroanesthetic alphaxalone and pentobarbital. Inhibited by the antagonist bicuculline. Potentiated by histamine. Functionally, alpha subunit of the heteropentameric ligand-gated chloride channel gated by gamma-aminobutyric acid (GABA), a major inhibitory neurotransmitter in the brain. GABA-gated chloride channels, also named GABA(A) receptors (GABAAR), consist of five subunits arranged around a central pore and contain GABA active binding site(s) located at the alpha and beta subunit interface(s). When activated by GABA, GABAARs selectively allow the flow of chloride anions across the cell membrane down their electrochemical gradient. Alpha-1/GABRA1-containing GABAARs are largely synaptic. Chloride influx into the postsynaptic neuron following GABAAR opening decreases the neuron ability to generate a new action potential, thereby reducing nerve transmission. GABAARs containing alpha-1 and beta-2 or -3 subunits exhibit synaptogenic activity; the gamma-2 subunit being necessary but not sufficient to induce rapid synaptic contacts formation. GABAARs function also as histamine receptor where histamine binds at the interface of two neighboring beta subunits and potentiates GABA response. GABAARs containing alpha, beta and epsilon subunits also permit spontaneous chloride channel activity while preserving the structural information required for GABA-gated openings. Alpha-1-mediated plasticity in the orbitofrontal cortex regulates context-dependent action selection. Together with rho subunits, may also control neuronal and glial GABAergic transmission in the cerebellum. The polypeptide is Gamma-aminobutyric acid receptor subunit alpha-1 (GABRA1) (Pongo abelii (Sumatran orangutan)).